The primary structure comprises 366 residues: Caffeic acid 3-O-methyltransferase (366 aa).

131–137 is a substrate binding site; the sequence is MNQDKIL. The interval 163–181 is substrate binding; it reads AFEYHGTDPRFNKIFNRGM. Residues G209, D232, D252, M253, and K266 each contribute to the S-adenosyl-L-methionine site. The active-site Proton acceptor is H270.

This sequence belongs to the class I-like SAM-binding methyltransferase superfamily. Cation-independent O-methyltransferase family. COMT subfamily. As to quaternary structure, homodimer.

The catalysed reaction is (E)-caffeate + S-adenosyl-L-methionine = (E)-ferulate + S-adenosyl-L-homocysteine + H(+). The protein operates within aromatic compound metabolism; phenylpropanoid biosynthesis. Catalyzes the conversion of caffeic acid to ferulic acid and of 5-hydroxyferulic acid to sinapic acid. The resulting products may subsequently be converted to the corresponding alcohols that are incorporated into lignins. In Eucalyptus gunnii (Cider gum), this protein is Caffeic acid 3-O-methyltransferase (OMT).